Consider the following 103-residue polypeptide: UPF0145 protein CYA_2258 (103 aa).

Belongs to the UPF0145 family.

This is UPF0145 protein CYA_2258 from Synechococcus sp. (strain JA-3-3Ab) (Cyanobacteria bacterium Yellowstone A-Prime).